The following is a 164-amino-acid chain: Respiratory growth induced protein 1 (164 aa).

Belongs to the RGI1 family.

The protein resides in the cell membrane. Its function is as follows. Involved in the control of energetic metabolism and significantly contribute to cell fitness, especially under respiratory growth conditions. The sequence is that of Respiratory growth induced protein 1 (RGI1) from Vanderwaltozyma polyspora (strain ATCC 22028 / DSM 70294 / BCRC 21397 / CBS 2163 / NBRC 10782 / NRRL Y-8283 / UCD 57-17) (Kluyveromyces polysporus).